We begin with the raw amino-acid sequence, 274 residues long: Cytochrome b-c1 complex subunit Rieske, mitochondrial (274 aa).

Topologically, residues 79–103 (SHTDVRVPDFSEYRRLEVLDSTKSS) are mitochondrial matrix. A helical membrane pass occupies residues 104–140 (RESSEARKGFSYLVTGVTTVGVAYAAKNVVTQFVSSM). At 141–274 (SASADVLALA…FTSDDMVIVG (134 aa)) the chain is on the mitochondrial intermembrane side. The 86-residue stretch at 187-272 (EAAVELSQLR…YEFTSDDMVI (86 aa)) folds into the Rieske domain. [2Fe-2S] cluster contacts are provided by cysteine 217, histidine 219, cysteine 236, histidine 239, and serine 241. Cysteine 222 and cysteine 238 are joined by a disulfide.

This sequence belongs to the Rieske iron-sulfur protein family. In terms of assembly, component of the ubiquinol-cytochrome c oxidoreductase (cytochrome b-c1 complex, complex III, CIII), a multisubunit enzyme composed of 11 subunits. The complex is composed of 3 respiratory subunits cytochrome b, cytochrome c1 and Rieske protein UQCRFS1, 2 core protein subunits UQCRC1/QCR1 and UQCRC2/QCR2, and 6 low-molecular weight protein subunits UQCRH/QCR6, UQCRB/QCR7, UQCRQ/QCR8, UQCR10/QCR9, UQCR11/QCR10 and subunit 9, the cleavage product of Rieske protein UQCRFS1. The complex exists as an obligatory dimer and forms supercomplexes (SCs) in the inner mitochondrial membrane with NADH-ubiquinone oxidoreductase (complex I, CI) and cytochrome c oxidase (complex IV, CIV), resulting in different assemblies (supercomplex SCI(1)III(2)IV(1) and megacomplex MCI(2)III(2)IV(2)). Incorporation of the Rieske protein UQCRFS1 is the penultimate step in complex III assembly. Interacts with TTC19, which is involved in the clearance of UQCRFS1 fragments. As to quaternary structure, component of the ubiquinol-cytochrome c oxidoreductase (cytochrome b-c1 complex, complex III, CIII). Subunit 9 corresponds to the mitochondrial targeting sequence (MTS) of Rieske protein UQCRFS1. It is retained after processing and incorporated inside complex III, where it remains bound to the complex and localizes between the 2 core subunits UQCRC1/QCR1 and UQCRC2/QCR2. Requires [2Fe-2S] cluster as cofactor. In terms of processing, proteolytic processing is necessary for the correct insertion of UQCRFS1 in the complex III dimer. Several fragments are generated during UQCRFS1 insertion, most probably due to the endogenous matrix-processing peptidase (MPP) activity of the 2 core protein subunits UQCRC1/QCR1 and UQCRC2/QCR2, which are homologous to the 2 mitochondrial-processing peptidase (MPP) subunits beta-MPP and alpha-MPP respectively. The action of the protease is also necessary for the clearance of the UQCRFS1 fragments.

The protein resides in the mitochondrion inner membrane. It carries out the reaction a quinol + 2 Fe(III)-[cytochrome c](out) = a quinone + 2 Fe(II)-[cytochrome c](out) + 2 H(+)(out). In terms of biological role, component of the ubiquinol-cytochrome c oxidoreductase, a multisubunit transmembrane complex that is part of the mitochondrial electron transport chain which drives oxidative phosphorylation. The respiratory chain contains 3 multisubunit complexes succinate dehydrogenase (complex II, CII), ubiquinol-cytochrome c oxidoreductase (cytochrome b-c1 complex, complex III, CIII) and cytochrome c oxidase (complex IV, CIV), that cooperate to transfer electrons derived from NADH and succinate to molecular oxygen, creating an electrochemical gradient over the inner membrane that drives transmembrane transport and the ATP synthase. The cytochrome b-c1 complex catalyzes electron transfer from ubiquinol to cytochrome c, linking this redox reaction to translocation of protons across the mitochondrial inner membrane, with protons being carried across the membrane as hydrogens on the quinol. In the process called Q cycle, 2 protons are consumed from the matrix, 4 protons are released into the intermembrane space and 2 electrons are passed to cytochrome c. The Rieske protein is a catalytic core subunit containing a [2Fe-2S] iron-sulfur cluster. It cycles between 2 conformational states during catalysis to transfer electrons from the quinol bound in the Q(0) site in cytochrome b to cytochrome c1. Incorporation of UQCRFS1 is the penultimate step in complex III assembly. Its function is as follows. Component of the ubiquinol-cytochrome c oxidoreductase (cytochrome b-c1 complex, complex III, CIII). UQCRFS1 undergoes proteolytic processing once it is incorporated in the complex III dimer. One of the fragments, called subunit 9, corresponds to its mitochondrial targeting sequence (MTS). The proteolytic processing is necessary for the correct insertion of UQCRFS1 in the complex III dimer, but the persistence of UQCRFS1-derived fragments may prevent newly imported UQCRFS1 to be processed and assembled into complex III and is detrimental for the complex III structure and function. The protein is Cytochrome b-c1 complex subunit Rieske, mitochondrial (UQCRFS1) of Pongo pygmaeus (Bornean orangutan).